Consider the following 179-residue polypeptide: Large ribosomal subunit protein uL5 (179 aa).

It belongs to the universal ribosomal protein uL5 family. In terms of assembly, part of the 50S ribosomal subunit; part of the 5S rRNA/L5/L18/L25 subcomplex. Contacts the 5S rRNA and the P site tRNA. Forms a bridge to the 30S subunit in the 70S ribosome.

Functionally, this is one of the proteins that bind and probably mediate the attachment of the 5S RNA into the large ribosomal subunit, where it forms part of the central protuberance. In the 70S ribosome it contacts protein S13 of the 30S subunit (bridge B1b), connecting the 2 subunits; this bridge is implicated in subunit movement. Contacts the P site tRNA; the 5S rRNA and some of its associated proteins might help stabilize positioning of ribosome-bound tRNAs. The sequence is that of Large ribosomal subunit protein uL5 from Rickettsia prowazekii (strain Madrid E).